Reading from the N-terminus, the 132-residue chain is Small ribosomal subunit protein uS8 (132 aa).

The protein belongs to the universal ribosomal protein uS8 family. As to quaternary structure, part of the 30S ribosomal subunit. Contacts proteins S5 and S12.

Functionally, one of the primary rRNA binding proteins, it binds directly to 16S rRNA central domain where it helps coordinate assembly of the platform of the 30S subunit. The chain is Small ribosomal subunit protein uS8 from Francisella philomiragia subsp. philomiragia (strain ATCC 25017 / CCUG 19701 / FSC 153 / O#319-036).